Here is an 80-residue protein sequence, read N- to C-terminus: Exodeoxyribonuclease 7 small subunit (80 aa).

Belongs to the XseB family. As to quaternary structure, heterooligomer composed of large and small subunits.

It is found in the cytoplasm. It carries out the reaction Exonucleolytic cleavage in either 5'- to 3'- or 3'- to 5'-direction to yield nucleoside 5'-phosphates.. Its function is as follows. Bidirectionally degrades single-stranded DNA into large acid-insoluble oligonucleotides, which are then degraded further into small acid-soluble oligonucleotides. This is Exodeoxyribonuclease 7 small subunit from Vibrio campbellii (strain ATCC BAA-1116).